We begin with the raw amino-acid sequence, 229 residues long: UPF0173 metal-dependent hydrolase SAOUHSC_01815 (229 aa).

This sequence belongs to the UPF0173 family.

In Staphylococcus aureus (strain NCTC 8325 / PS 47), this protein is UPF0173 metal-dependent hydrolase SAOUHSC_01815.